We begin with the raw amino-acid sequence, 700 residues long: uncharacterized protein (700 aa).

[4Fe-4S] cluster contacts are provided by cysteine 307, cysteine 310, cysteine 314, and cysteine 558.

The protein belongs to the AOR/FOR family. [4Fe-4S] cluster serves as cofactor. Mo-molybdopterin is required as a cofactor. It depends on tungstopterin as a cofactor.

This is an uncharacterized protein from Escherichia coli (strain K12).